We begin with the raw amino-acid sequence, 90 residues long: Elongation factor 1-beta (90 aa).

Belongs to the EF-1-beta/EF-1-delta family.

In terms of biological role, promotes the exchange of GDP for GTP in EF-1-alpha/GDP, thus allowing the regeneration of EF-1-alpha/GTP that could then be used to form the ternary complex EF-1-alpha/GTP/AAtRNA. The sequence is that of Elongation factor 1-beta from Staphylothermus marinus (strain ATCC 43588 / DSM 3639 / JCM 9404 / F1).